The sequence spans 330 residues: 4-hydroxythreonine-4-phosphate dehydrogenase (330 aa).

Residues His134 and Thr135 each coordinate substrate. Residues His163, His208, and His263 each coordinate a divalent metal cation. The substrate site is built by Lys271, Asn280, and Arg289.

Belongs to the PdxA family. In terms of assembly, homodimer. It depends on Zn(2+) as a cofactor. Mg(2+) is required as a cofactor. Co(2+) serves as cofactor.

It is found in the cytoplasm. The enzyme catalyses 4-(phosphooxy)-L-threonine + NAD(+) = 3-amino-2-oxopropyl phosphate + CO2 + NADH. The protein operates within cofactor biosynthesis; pyridoxine 5'-phosphate biosynthesis; pyridoxine 5'-phosphate from D-erythrose 4-phosphate: step 4/5. Its function is as follows. Catalyzes the NAD(P)-dependent oxidation of 4-(phosphooxy)-L-threonine (HTP) into 2-amino-3-oxo-4-(phosphooxy)butyric acid which spontaneously decarboxylates to form 3-amino-2-oxopropyl phosphate (AHAP). This Methylococcus capsulatus (strain ATCC 33009 / NCIMB 11132 / Bath) protein is 4-hydroxythreonine-4-phosphate dehydrogenase.